The following is a 113-amino-acid chain: Hydrogenase maturation factor HypA (113 aa).

Position 2 (His2) interacts with Ni(2+). 4 residues coordinate Zn(2+): Cys70, Cys73, Cys86, and Cys88.

The protein belongs to the HypA/HybF family.

In terms of biological role, involved in the maturation of [NiFe] hydrogenases. Required for nickel insertion into the metal center of the hydrogenase. The protein is Hydrogenase maturation factor HypA of Nostoc sp. (strain PCC 7120 / SAG 25.82 / UTEX 2576).